Reading from the N-terminus, the 485-residue chain is Dual specificity protein phosphatase CDC14B (485 aa).

A disordered region spans residues 1–38 (MKRKSERRSAWATAPPCSRRSSSSSPGVKKSRSSTPQE). The short motif at 1-54 (MKRKSERRSAWATAPPCSRRSSSSSPGVKKSRSSTPQELHRLEQQDDLYLDITD) is the Nucleolar localization signal element. The span at 15–28 (PPCSRRSSSSSPGV) shows a compositional bias: low complexity. An a region spans residues 44–198 (QQDDLYLDIT…AMQYGFFNFN (155 aa)). A linker region spans residues 199–212 (SFNLDEYEHYEKAE). Residues 213-379 (NGDFNWIIPE…EGDYFRQKLR (167 aa)) are b. A Tyrosine-protein phosphatase domain is found at 215 to 374 (DFNWIIPERF…SSLWLEGDYF (160 aa)). The active-site Phosphocysteine intermediate is C314. Residues 402–424 (LNGLENQDNQEPEPYSDDDEVSG) are disordered. Residues 409-422 (DNQEPEPYSDDDEV) are compositionally biased toward acidic residues.

It belongs to the protein-tyrosine phosphatase family. Non-receptor class CDC14 subfamily. Interacts with FZR1/CDH1.

It localises to the nucleus. The protein resides in the nucleolus. It is found in the nucleoplasm. The enzyme catalyses O-phospho-L-tyrosyl-[protein] + H2O = L-tyrosyl-[protein] + phosphate. It catalyses the reaction O-phospho-L-seryl-[protein] + H2O = L-seryl-[protein] + phosphate. The catalysed reaction is O-phospho-L-threonyl-[protein] + H2O = L-threonyl-[protein] + phosphate. In terms of biological role, dual-specificity phosphatase involved in DNA damage response. Essential regulator of the G2 DNA damage checkpoint: following DNA damage, translocates to the nucleus and dephosphorylates FZR1/CDH1, a key activator of the anaphase promoting complex/cyclosome (APC/C). Dephosphorylates SIRT2 around early anaphase. Dephosphorylation of FZR1/CDH1 activates the APC/C, leading to the ubiquitination of PLK1, preventing entry into mitosis. Preferentially dephosphorylates proteins modified by proline-directed kinases. This is Dual specificity protein phosphatase CDC14B (Cdc14b) from Mus musculus (Mouse).